The chain runs to 571 residues: Protein EARLY STARVATION 1, chloroplastic (571 aa).

Disordered stretches follow at residues 142–162 and 215–254; these read RHSSCSSQSLPQQQRRTKDAG and GSYRGGPVHGANHIRPLQRPDSVHPQPLTSARPRRGTEHD. The span at 145 to 155 shows a compositional bias: low complexity; it reads SCSSQSLPQQQ.

The protein belongs to the ESV1 family.

The protein resides in the plastid. It localises to the chloroplast stroma. Its function is as follows. Binds preferentially to highly ordered alpha-glucans, such as starch and crystalline maltodextrins. Involved in the organization of the starch granule matrix, thus influencing starch turnover by modulating the accessibility of starch polymers to modifying and degrading enzymes. Required for the control of starch degradation in leaves and starch distribution in nonphotosynthetic parts. Promotes gravitropic responses, negative in shoots but positive in roots, by facilitating starch granules (statoliths) formation in hypocotyls and roots columella. In Marchantia polymorpha (Common liverwort), this protein is Protein EARLY STARVATION 1, chloroplastic.